The following is a 561-amino-acid chain: Arginine--tRNA ligase (561 aa).

The short motif at 129–139 (ANPTGPLHVGH) is the 'HIGH' region element.

This sequence belongs to the class-I aminoacyl-tRNA synthetase family. In terms of assembly, monomer.

It is found in the cytoplasm. The enzyme catalyses tRNA(Arg) + L-arginine + ATP = L-arginyl-tRNA(Arg) + AMP + diphosphate. In Polaromonas sp. (strain JS666 / ATCC BAA-500), this protein is Arginine--tRNA ligase.